The following is a 216-amino-acid chain: Ceramide-1-phosphate transfer protein (216 aa).

Residues Asp56, Lys60, Arg108, Arg112, and His152 each coordinate an N-acylsphingoid base 1-phosphate.

The protein belongs to the GLTP family.

The protein resides in the cytoplasm. Its subcellular location is the cytosol. It localises to the golgi apparatus. The protein localises to the trans-Golgi network membrane. It is found in the cell membrane. The protein resides in the endosome membrane. Its subcellular location is the nucleus outer membrane. It catalyses the reaction N-(hexadecanoyl)-sphing-4-enine-1-phosphate(in) = N-(hexadecanoyl)-sphing-4-enine-1-phosphate(out). The catalysed reaction is N-(9Z-octadecenoyl)-sphing-4-enine-1-phosphate(in) = N-(9Z-octadecenoyl)-sphing-4-enine-1-phosphate(out). Functionally, mediates the intracellular transfer of ceramide-1-phosphate (C1P) between organelle membranes and the cell membrane. Required for normal structure of the Golgi stacks. Can bind phosphoceramides with a variety of aliphatic chains, but has a preference for lipids with saturated C16:0 or monounsaturated C18:1 aliphatic chains, and is inefficient with phosphoceramides containing lignoceryl (C24:0). Plays a role in the regulation of the cellular levels of ceramide-1-phosphate, and thereby contributes to the regulation of phospholipase PLA2G4A activity and the release of arachidonic acid. Has no activity with galactosylceramide, lactosylceramide, sphingomyelin, phosphatidylcholine, phosphatidic acid and ceramide. C1P transfer is stimulated by phosphatidylserine in C1P source vesicles. Regulates autophagy, inflammasome mediated IL1B and IL18 processing, and pyroptosis, but not apoptosis. The chain is Ceramide-1-phosphate transfer protein from Mus musculus (Mouse).